The sequence spans 199 residues: Large ribosomal subunit protein uL4 (199 aa).

This sequence belongs to the universal ribosomal protein uL4 family. Part of the 50S ribosomal subunit.

Functionally, one of the primary rRNA binding proteins, this protein initially binds near the 5'-end of the 23S rRNA. It is important during the early stages of 50S assembly. It makes multiple contacts with different domains of the 23S rRNA in the assembled 50S subunit and ribosome. Its function is as follows. Forms part of the polypeptide exit tunnel. The sequence is that of Large ribosomal subunit protein uL4 from Aquifex pyrophilus.